Consider the following 878-residue polypeptide: AP-2 complex subunit alpha (878 aa).

It belongs to the adaptor complexes large subunit family. In terms of assembly, adaptor protein complex 2 (AP-2) is a heterotetramer composed of two large adaptins (alpha-type subunit apl3 and beta-type subunit apl1), a medium chain (mu-type subunit apm4) and a small adaptin (sigma-type subunit aps2).

It localises to the cell membrane. The protein localises to the membrane. Its subcellular location is the coated pit. In terms of biological role, adaptins are components of the adaptor complexes which link clathrin to receptors in coated vesicles. Clathrin-associated protein complexes are believed to interact with the cytoplasmic tails of membrane proteins, leading to their selection and concentration. Alpha adaptin is a subunit of the plasma membrane adaptor. The sequence is that of AP-2 complex subunit alpha (apl3) from Schizosaccharomyces pombe (strain 972 / ATCC 24843) (Fission yeast).